Consider the following 399-residue polypeptide: Probable endo-xylogalacturonan hydrolase A (399 aa).

A signal peptide spans 1-19 (MTFGKAAFLSFSLFGASWA). PbH1 repeat units follow at residues 177–207 (TTNA…DIGE), 208–229 (STYV…AFKP), 231–251 (CNYL…SVGS), 260–283 (VQNV…KTYP), and 293–314 (VTNV…QIQS). Asp-222 functions as the Proton donor in the catalytic mechanism. His-245 is a catalytic residue. Asn-295 and Asn-382 each carry an N-linked (GlcNAc...) asparagine glycan.

It belongs to the glycosyl hydrolase 28 family.

Its subcellular location is the secreted. Pectinolytic enzyme involved in the degradation of xylogalacturonan (xga), a galacturonan backbone heavily substituted with xylose, and which is one important component of the hairy regions of pectin. Activity requires a galacturonic acid backbone substituted with xylose. The protein is Probable endo-xylogalacturonan hydrolase A (xghA) of Emericella nidulans (strain FGSC A4 / ATCC 38163 / CBS 112.46 / NRRL 194 / M139) (Aspergillus nidulans).